The primary structure comprises 177 residues: MKRIVLLRLGHRPERDKRITTHVGLTARMLGAEGMLLASDDSGIVQSLEDVVRRWGGNFYIKNNVSFKQEIRNWKEGGGKVCHLSMYGVNLPDLADELKKCDKLMIVVGAEKVPPEIYQLADWNVAVGSQPHSEVAAVAITMDRIAEGEPLEKEFPGAELTIVPAERGKHVIENAGE.

S-adenosyl-L-methionine is bound by residues Leu-84 and 109–113 (GAEKV).

Belongs to the aTrm56 family. As to quaternary structure, homodimer.

Its subcellular location is the cytoplasm. The catalysed reaction is cytidine(56) in tRNA + S-adenosyl-L-methionine = 2'-O-methylcytidine(56) in tRNA + S-adenosyl-L-homocysteine + H(+). Its function is as follows. Specifically catalyzes the AdoMet-dependent 2'-O-ribose methylation of cytidine at position 56 in tRNAs. This Methanosarcina mazei (strain ATCC BAA-159 / DSM 3647 / Goe1 / Go1 / JCM 11833 / OCM 88) (Methanosarcina frisia) protein is tRNA (cytidine(56)-2'-O)-methyltransferase.